Reading from the N-terminus, the 94-residue chain is Phosphoribosyl-ATP pyrophosphatase (94 aa).

Belongs to the PRA-PH family.

Its subcellular location is the cytoplasm. The catalysed reaction is 1-(5-phospho-beta-D-ribosyl)-ATP + H2O = 1-(5-phospho-beta-D-ribosyl)-5'-AMP + diphosphate + H(+). The protein operates within amino-acid biosynthesis; L-histidine biosynthesis; L-histidine from 5-phospho-alpha-D-ribose 1-diphosphate: step 2/9. This chain is Phosphoribosyl-ATP pyrophosphatase (hisE), found in Pyrobaculum aerophilum (strain ATCC 51768 / DSM 7523 / JCM 9630 / CIP 104966 / NBRC 100827 / IM2).